We begin with the raw amino-acid sequence, 91 residues long: Large ribosomal subunit protein bL27 (91 aa).

Residues 1–20 (MAHKKGVGSSKNGRDSNPKY) form a disordered region.

This sequence belongs to the bacterial ribosomal protein bL27 family.

The polypeptide is Large ribosomal subunit protein bL27 (Deinococcus geothermalis (strain DSM 11300 / CIP 105573 / AG-3a)).